The sequence spans 335 residues: Probable cytosolic iron-sulfur protein assembly protein Ciao1 (335 aa).

WD repeat units follow at residues 12 to 51 (GHKG…WSTK), 57 to 96 (GHKR…FECN), 101 to 140 (GHEN…EFEC), 146 to 185 (PHTQ…SDWD), 192 to 231 (SHTS…NDAG), 250 to 289 (QHSR…KRDE), and 301 to 335 (AHEQ…KMLD).

This sequence belongs to the WD repeat CIA1 family.

Its function is as follows. Essential component of the cytosolic iron-sulfur (Fe/S) protein assembly machinery. Required for the maturation of extramitochondrial Fe/S proteins. The protein is Probable cytosolic iron-sulfur protein assembly protein Ciao1 of Drosophila willistoni (Fruit fly).